The primary structure comprises 110 residues: Large ribosomal subunit protein uL22 (110 aa).

It belongs to the universal ribosomal protein uL22 family. Part of the 50S ribosomal subunit.

Its function is as follows. This protein binds specifically to 23S rRNA; its binding is stimulated by other ribosomal proteins, e.g. L4, L17, and L20. It is important during the early stages of 50S assembly. It makes multiple contacts with different domains of the 23S rRNA in the assembled 50S subunit and ribosome. The globular domain of the protein is located near the polypeptide exit tunnel on the outside of the subunit, while an extended beta-hairpin is found that lines the wall of the exit tunnel in the center of the 70S ribosome. This Chromohalobacter salexigens (strain ATCC BAA-138 / DSM 3043 / CIP 106854 / NCIMB 13768 / 1H11) protein is Large ribosomal subunit protein uL22.